The following is an 878-amino-acid chain: Aconitase htyD (878 aa).

Residues glutamine 173 and 290-292 (DSH) each bind substrate. [4Fe-4S] cluster contacts are provided by cysteine 472, cysteine 535, and cysteine 538. The substrate site is built by arginine 558 and arginine 563. Positions 626 to 671 (IAIANQRTKPAPTMPAYVEPYRSFQPPVPPSSDQPQSMKDHGKTSN) are disordered. Residue 742 to 743 (SR) coordinates substrate.

Belongs to the aconitase/IPM isomerase family.

It participates in antifungal biosynthesis. Aconitase; part of the gene cluster that mediates the de novo generation of L-homotyrosine from acetyl-CoA and 4-hydroxyphenyl-pyruvate. L-homotyrosine is a building block of echinocandin B, a fungal lipidated cyclic hexapeptide that acts as an antifungal agent. L-homotyrosine 4-hydroxyphenyl-pyruvate first undergoes an aldol-type condensation by htyA with the C-2 of acetyl-CoA followed by the release of CoA to form 2-(4-hydroxybenzyl)-malate. This is followed by isomerization of 2-(4-hydroxy-benzyl)-malate to 3-(4-hydroxybenzyl)-malate by htyD. Thereafter, 3-(4-hydroxybenzyl)-malate undergoes decarboxylation and oxidation to form 2-oxo-4-(4-hydroxybenzyl)butanoic acid, coupled to reduction of NAD(+) to NADH by htyC. The product then undergoes transamination catalyzed by htyB to form L-homotyrosine. In Aspergillus rugulosus (Emericella rugulosa), this protein is Aconitase htyD.